The following is a 115-amino-acid chain: NAD(P)H-quinone oxidoreductase subunit M (115 aa).

This sequence belongs to the complex I NdhM subunit family. In terms of assembly, NDH-1 can be composed of about 15 different subunits; different subcomplexes with different compositions have been identified which probably have different functions.

The protein resides in the cellular thylakoid membrane. The catalysed reaction is a plastoquinone + NADH + (n+1) H(+)(in) = a plastoquinol + NAD(+) + n H(+)(out). The enzyme catalyses a plastoquinone + NADPH + (n+1) H(+)(in) = a plastoquinol + NADP(+) + n H(+)(out). In terms of biological role, NDH-1 shuttles electrons from an unknown electron donor, via FMN and iron-sulfur (Fe-S) centers, to quinones in the respiratory and/or the photosynthetic chain. The immediate electron acceptor for the enzyme in this species is believed to be plastoquinone. Couples the redox reaction to proton translocation, and thus conserves the redox energy in a proton gradient. Cyanobacterial NDH-1 also plays a role in inorganic carbon-concentration. In Prochlorococcus marinus subsp. pastoris (strain CCMP1986 / NIES-2087 / MED4), this protein is NAD(P)H-quinone oxidoreductase subunit M.